A 101-amino-acid chain; its full sequence is 2-amino-4-ketopentanoate thiolase alpha subunit (101 aa).

The protein belongs to the OrtA family. As to quaternary structure, heterodimer with OrtB.

It catalyses the reaction D-alanine + acetyl-CoA = (2R)-2-amino-4-oxopentanoate + CoA. Functionally, involved in the ornithine fermentation pathway. Catalyzes the thiolytic cleavage of 2-amino-4-ketopentanoate (AKP) with coenzyme A (CoA) to form acetyl-CoA and alanine. It is strictly specific for AKP. The sequence is that of 2-amino-4-ketopentanoate thiolase alpha subunit from Unknown prokaryotic organism.